Reading from the N-terminus, the 615-residue chain is DNA mismatch repair protein MutL (615 aa).

The interval 369–397 (REPVAPRYTPAPASGSRPAAPWPNAQPGY) is disordered. Residues 378–391 (PAPASGSRPAAPWP) show a composition bias toward low complexity.

This sequence belongs to the DNA mismatch repair MutL/HexB family.

Functionally, this protein is involved in the repair of mismatches in DNA. It is required for dam-dependent methyl-directed DNA mismatch repair. May act as a 'molecular matchmaker', a protein that promotes the formation of a stable complex between two or more DNA-binding proteins in an ATP-dependent manner without itself being part of a final effector complex. The sequence is that of DNA mismatch repair protein MutL from Escherichia coli (strain SMS-3-5 / SECEC).